Here is a 300-residue protein sequence, read N- to C-terminus: Cation-efflux pump FieF (300 aa).

Residues 24-44 (LLIKIFAWWYTGSVSILAALV) form a helical membrane-spanning segment. Zn(2+) contacts are provided by D45 and D49. 2 helical membrane passes run 82–102 (AALA…LTSI) and 114–134 (PGVG…LVTF). Residues H153 and D157 each contribute to the Zn(2+) site. Helical transmembrane passes span 156–176 (SDVM…YGWH) and 178–198 (ADAL…LRMG).

The protein belongs to the cation diffusion facilitator (CDF) transporter (TC 2.A.4) family. FieF subfamily. Homodimer.

It is found in the cell inner membrane. The catalysed reaction is Zn(2+)(in) + H(+)(out) = Zn(2+)(out) + H(+)(in). The enzyme catalyses Cd(2+)(in) + H(+)(out) = Cd(2+)(out) + H(+)(in). It carries out the reaction Fe(2+)(in) + H(+)(out) = Fe(2+)(out) + H(+)(in). In terms of biological role, divalent metal cation transporter which exports Zn(2+), Cd(2+) and possibly Fe(2+). May be involved in zinc and iron detoxification by efflux. The sequence is that of Cation-efflux pump FieF from Salmonella schwarzengrund (strain CVM19633).